We begin with the raw amino-acid sequence, 534 residues long: Lysophosphatidylcholine acyltransferase 1 (534 aa).

Residues 1 to 25 (MRLRGRGPRAAPSSSSGAGDARRLA) are disordered. The Cytoplasmic segment spans residues 1-57 (MRLRGRGPRAAPSSSSGAGDARRLAPPGRNPFVHELRLSALQKAQVAFMTLTLFPIR). The span at 8–19 (PRAAPSSSSGAG) shows a compositional bias: low complexity. Residues 58–78 (LLFAAFMMLLAWPFALVASLG) form a helical; Signal-anchor for type II membrane protein membrane-spanning segment. Topologically, residues 79 to 534 (PPDKEPEQPL…GRKNSCKKVD (456 aa)) are lumenal. The HXXXXD motif signature appears at 135–140 (HSSYFD). EF-hand domains follow at residues 379 to 414 (PVSD…VCRP) and 451 to 486 (ISEL…YPDF). D392, S394, E398, and E403 together coordinate Ca(2+). Positions 531–534 (KKVD) match the Di-lysine motif motif.

The protein belongs to the 1-acyl-sn-glycerol-3-phosphate acyltransferase family. In terms of tissue distribution, enriched in alveolar type II cells of lung. Also highly expressed in stomach.

Its subcellular location is the endoplasmic reticulum membrane. It localises to the golgi apparatus membrane. The protein localises to the cell membrane. It is found in the lipid droplet. It carries out the reaction a 1-acyl-sn-glycero-3-phosphocholine + an acyl-CoA = a 1,2-diacyl-sn-glycero-3-phosphocholine + CoA. The enzyme catalyses a 1-O-alkyl-sn-glycero-3-phosphocholine + acetyl-CoA = a 1-O-alkyl-2-acetyl-sn-glycero-3-phosphocholine + CoA. The catalysed reaction is a 1-acyl-sn-glycero-3-phosphate + an acyl-CoA = a 1,2-diacyl-sn-glycero-3-phosphate + CoA. It catalyses the reaction a 1-O-(1Z-alkenyl)-sn-glycero-3-phosphocholine + an acyl-CoA = a 1-O-(1Z-alkenyl)-2-acyl-sn-glycero-3-phosphocholine + CoA. It carries out the reaction 1-acyl-sn-glycero-3-phospho-(1'-sn-glycerol) + an acyl-CoA = a 1,2-diacyl-sn-glycero-3-phospho-(1'-sn-glycerol) + CoA. The enzyme catalyses a 1-acyl-sn-glycero-3-phosphocholine + hexadecanoyl-CoA = 1-acyl-2-hexadecanoyl-sn-glycero-3-phosphocholine + CoA. The catalysed reaction is a 1-acyl-sn-glycero-3-phosphate + hexadecanoyl-CoA = 1-acyl-2-hexadecanoyl-sn-glycero-3-phosphate + CoA. It catalyses the reaction 1-acyl-sn-glycero-3-phospho-(1'-sn-glycerol) + hexadecanoyl-CoA = 1-acyl-2-hexadecanoyl-sn-glycero-3-phospho-(1'-sn-glycerol) + CoA. It carries out the reaction 1-hexadecanoyl-sn-glycero-3-phosphocholine + hexadecanoyl-CoA = 1,2-dihexadecanoyl-sn-glycero-3-phosphocholine + CoA. The enzyme catalyses 1-O-hexadecyl-sn-glycero-3-phosphocholine + hexadecanoyl-CoA = 1-O-hexadecyl-2-hexadecanoyl-sn-glycero-3-phosphocholine + CoA. The catalysed reaction is a 1-O-(1Z-alkenyl)-sn-glycero-3-phosphocholine + hexadecanoyl-CoA = 1-O-(1Z)-alkenyl-2-hexadecanoyl-sn-glycero-3-phosphocholine + CoA. It catalyses the reaction 1-hexadecanoyl-sn-glycero-3-phospho-(1'-sn-glycerol) + hexadecanoyl-CoA = 1,2-dihexadecanoyl-sn-glycero-3-phospho-(1'-sn-glycerol) + CoA. It carries out the reaction 1-dodecanoyl-sn-glycero-3-phosphocholine + hexadecanoyl-CoA = 1-dodecanoyl-2-hexadecanoyl-sn-glycero-3-phosphocholine + CoA. The enzyme catalyses 1-tetradecanoyl-sn-glycero-3-phosphocholine + hexadecanoyl-CoA = 1-tetradecanoyl-2-hexadecanoyl-sn-glycero-3-phosphocholine + CoA. The catalysed reaction is 1-O-octadecyl-sn-glycero-3-phosphocholine + hexadecanoyl-CoA = 1-O-octadecyl-2-hexadecanoyl-sn-glycero-3-phosphocholine + CoA. It catalyses the reaction 1-octadecanoyl-sn-glycero-3-phosphocholine + hexadecanoyl-CoA = 1-octadecanoyl-2-hexadecanoyl-sn-glycero-3-phosphocholine + CoA. It carries out the reaction 1-(9Z-octadecenoyl)-sn-glycero-3-phosphocholine + hexadecanoyl-CoA = 1-(9Z-octadecenoyl)-2-hexadecanoyl-sn-glycero-3-phosphocholine + CoA. The enzyme catalyses 1-eicosanoyl-sn-glycero-3-phosphocholine + hexadecanoyl-CoA = 1-eicosanoyl-2-hexadecanoyl-sn-glycero-3-phosphocholine + CoA. The catalysed reaction is hexanoyl-CoA + 1-hexadecanoyl-sn-glycero-3-phosphocholine = 1-hexadecanoyl-2-hexanoyl-sn-glycero-3-phosphocholine + CoA. It catalyses the reaction octanoyl-CoA + 1-hexadecanoyl-sn-glycero-3-phosphocholine = 1-hexadecanoyl-2-octanoyl-sn-glycero-3-phosphocholine + CoA. It carries out the reaction decanoyl-CoA + 1-hexadecanoyl-sn-glycero-3-phosphocholine = 1-hexadecanoyl-2-decanoyl-sn-glycero-3-phosphocholine + CoA. The enzyme catalyses dodecanoyl-CoA + 1-hexadecanoyl-sn-glycero-3-phosphocholine = 1-hexadecanoyl-2-dodecanoyl-sn-glycero-3-phosphocholine + CoA. The catalysed reaction is tetradecanoyl-CoA + 1-hexadecanoyl-sn-glycero-3-phosphocholine = 1-hexadecanoyl-2-tetradecanoyl-sn-glycero-3-phosphocholine + CoA. It catalyses the reaction 1-hexadecanoyl-sn-glycero-3-phosphocholine + (9Z)-octadecenoyl-CoA = 1-hexadecanoyl-2-(9Z-octadecenoyl)-sn-glycero-3-phosphocholine + CoA. It carries out the reaction (9Z,12Z)-octadecadienoyl-CoA + 1-hexadecanoyl-sn-glycero-3-phosphocholine = 1-hexadecanoyl-2-(9Z,12Z-octadecadienoyl)-sn-glycero-3-phosphocholine + CoA. The enzyme catalyses (4Z,7Z,10Z,13Z,16Z,19Z)-docosahexaenoyl-CoA + 1-hexadecanoyl-sn-glycero-3-phosphocholine = 1-hexadecanoyl-2-(4Z,7Z,10Z,13Z,16Z,19Z-docosahexaenoyl)-sn-glycero-3-phosphocholine + CoA. The catalysed reaction is 1-hexadecanoyl-sn-glycero-3-phosphocholine + acetyl-CoA = 1-hexadecanoyl-2-acetyl-sn-glycero-3-phosphocholine + CoA. It catalyses the reaction eicosanoyl-CoA + 1-hexadecanoyl-sn-glycero-3-phosphocholine = 1-hexadecanoyl-2-eicosanoyl-sn-glycero-3-phosphocholine + CoA. It carries out the reaction 1-O-hexadecyl-sn-glycero-3-phosphocholine + acetyl-CoA = 1-O-hexadecyl-2-acetyl-sn-glycero-3-phosphocholine + CoA. The protein operates within lipid metabolism; phospholipid metabolism. Its activity is regulated as follows. Activity is stimulated by Mg(2+) or Mn(2+). Functionally, exhibits acyltransferase activity. Exhibits acetyltransferase activity. Activity is calcium-independent. Catalyzes the conversion of lysophosphatidylcholine (1-acyl-sn-glycero-3-phosphocholine or LPC) into phosphatidylcholine (1,2-diacyl-sn-glycero-3-phosphocholine or PC). Catalyzes the conversion 1-acyl-sn-glycerol-3-phosphate (lysophosphatidic acid or LPA) into 1,2-diacyl-sn-glycerol-3-phosphate (phosphatidic acid or PA) by incorporating an acyl moiety at the sn-2 position of the glycerol backbone. Displays a clear preference for saturated fatty acyl-CoAs, and 1-myristoyl or 1-palmitoyl LPC as acyl donors and acceptors, respectively. Involved in platelet-activating factor (PAF) biosynthesis by catalyzing the conversion of the PAF precursor, 1-O-alkyl-sn-glycero-3-phosphocholine (lyso-PAF) into 1-O-alkyl-2-acetyl-sn-glycero-3-phosphocholine (PAF). May synthesize phosphatidylcholine in pulmonary surfactant, thereby playing a pivotal role in respiratory physiology. Involved in the regulation of lipid droplet number and size. This is Lysophosphatidylcholine acyltransferase 1 (Lpcat1) from Rattus norvegicus (Rat).